The chain runs to 731 residues: Polyribonucleotide nucleotidyltransferase (731 aa).

Asp-488 and Asp-494 together coordinate Mg(2+). The 60-residue stretch at 555-614 (PRIEVINIAVDKIRDVIGSGGKVIREIVEQTGAKINIEDDGTIKIASADAKTIEAAKRWI) folds into the KH domain. Positions 624–692 (GAIYQGTVVK…ERGKVRLSMK (69 aa)) constitute an S1 motif domain. The tract at residues 693-731 (AVDQKTGKEMTDDKSVKEEKCMDEKKQPENKRRRKKKEE) is disordered. Residues 694–722 (VDQKTGKEMTDDKSVKEEKCMDEKKQPEN) show a composition bias toward basic and acidic residues.

Belongs to the polyribonucleotide nucleotidyltransferase family. Mg(2+) serves as cofactor.

It localises to the cytoplasm. The catalysed reaction is RNA(n+1) + phosphate = RNA(n) + a ribonucleoside 5'-diphosphate. Functionally, involved in mRNA degradation. Catalyzes the phosphorolysis of single-stranded polyribonucleotides processively in the 3'- to 5'-direction. This Bartonella tribocorum (strain CIP 105476 / IBS 506) protein is Polyribonucleotide nucleotidyltransferase.